A 590-amino-acid polypeptide reads, in one-letter code: Cytosolic Fe-S cluster assembly factor nar1 (590 aa).

Residues C20, C62, C65, C68, C214, C269, C456, and C460 each coordinate [4Fe-4S] cluster.

This sequence belongs to the NARF family.

Its function is as follows. Component of the cytosolic Fe/S protein assembly machinery. Required for maturation of extramitochondrial Fe/S proteins. May play a role in the transfer of pre-assembled Fe/S clusters to target apoproteins. The polypeptide is Cytosolic Fe-S cluster assembly factor nar1 (nar1) (Talaromyces marneffei (strain ATCC 18224 / CBS 334.59 / QM 7333) (Penicillium marneffei)).